The chain runs to 1605 residues: Nuclear pore complex protein Nup153 (1605 aa).

The span at 1-16 (MAAAGGGGPGGPGTGG) shows a compositional bias: gly residues. Disordered regions lie at residues 1-44 (MAAA…GIIS) and 185-208 (STSQ…SDKD). 2 stretches are compositionally biased toward polar residues: residues 27-44 (SGRT…GIIS) and 194-203 (ISTTSGFSSR). The stretch at 249-250 (FG) is repeat 1. The segment at 249–1556 (FGSLSPSLGN…NSSGGVFTFN (1308 aa)) is 33 X 2 AA repeats of F-G. Disordered stretches follow at residues 332–373 (SPLA…PFPP), 397–476 (LTPS…GPVL), and 497–522 (SGSA…SSSP). Over residues 397-409 (LTPSAVSNTNSRR) the composition is skewed to polar residues. Residues 410–420 (IQPDKHNESRK) show a composition bias toward basic and acidic residues. Polar residues-rich tracts occupy residues 421 to 432 (NNLQTTSQSHSF) and 497 to 517 (SGSA…TCRL). The RanBP2-type 1 zinc finger occupies 655–684 (AFGLWQCSACFHENMSSDSNCISCSALKPR). Residues 656–657 (FG) form repeat 2. Positions 661, 664, 675, and 678 each coordinate Zn(2+). The tract at residues 686 to 711 (TETSKKLPASPPSSNTKSTVPLSSTP) is disordered. Positions 697–711 (PSSNTKSTVPLSSTP) are enriched in polar residues. 4 RanBP2-type zinc fingers span residues 720–749 (PAGM…PKPG), 790–819 (PMGS…EKPG), 842–871 (PTGS…AKPG), and 906–935 (SAGS…SKPG). Cys726, Cys729, Cys740, Cys743, Cys796, Cys799, Cys810, Cys813, Cys848, Cys851, Cys862, and Cys865 together coordinate Zn(2+). 31 consecutive repeat copies span residues 943–944 (FG), 959–960 (FG), 988–989 (FG), 1007–1008 (FG), 1021–1022 (FG), 1044–1045 (FG), 1100–1101 (FG), 1116–1117 (FG), 1134–1135 (FG), 1148–1149 (FG), 1167–1168 (FG), 1188–1189 (FG), 1227–1228 (FG), 1243–1244 (FG), 1259–1260 (FG), 1275–1276 (FG), 1291–1292 (FG), 1307–1308 (FG), 1339–1340 (FG), 1356–1357 (FG), 1371–1372 (FG), 1382–1383 (FG), 1414–1415 (FG), 1430–1431 (FG), 1448–1449 (FG), 1470–1471 (FG), 1482–1483 (FG), 1502–1503 (FG), 1512–1513 (FG), 1521–1522 (FG), and 1535–1536 (FG). Positions 1499 to 1518 (VPAFGSSSAQPPVFGQQATQ) are enriched in polar residues. The segment at 1499–1529 (VPAFGSSSAQPPVFGQQATQPSFGSPAAPSA) is disordered. The segment covering 1519 to 1529 (PSFGSPAAPSA) has biased composition (low complexity). The interval 1556–1605 (NANSGSTTQPPPPGYMFNAAAPGFNMGTNGRTTPASTISTRKIKTARRRK) is disordered. Residues 1581-1595 (MGTNGRTTPASTIST) are compositionally biased toward polar residues. The segment covering 1596-1605 (RKIKTARRRK) has biased composition (basic residues).

The protein belongs to the NUP153 family. Interacts (via C-terminal domain) with the nuclear receptor kpnb1; the interaction occurs in a RanGTP-dependent manner. Associates with the Importin alpha/Importin beta receptor. Requires Zn(2+) as cofactor. As to expression, egg (at protein level).

The protein localises to the nucleus membrane. Its subcellular location is the nucleus. It is found in the nuclear pore complex. Its function is as follows. Component of the nuclear pore complex (NPC), a complex required for the trafficking across the nuclear envelope. Functions as a scaffolding element in the nuclear phase of the NPC essential for normal nucleocytoplasmic transport of proteins and mRNAs. May be involved in the retention of unspliced mRNAs in the nucleus. Probably mediates tpr anchoring to the nuclear membrane at NPC. Possible DNA-binding subunit of the nuclear pore complex (NPC). The sequence is that of Nuclear pore complex protein Nup153 (nup153) from Xenopus laevis (African clawed frog).